Here is a 207-residue protein sequence, read N- to C-terminus: Holliday junction branch migration complex subunit RuvA (207 aa).

Residues 1-64 (MIGRLTGILA…ETSQQLFGFS (64 aa)) are domain I. A domain II region spans residues 65–142 (SQQDRELFRM…ALDTTPSEHS (78 aa)). Residues 143 to 157 (PTGEGAGIVRVDPVI) form a flexible linker region. Positions 158 to 207 (NTNVIIADAESALIGLGYKPTEAAKAVSAAYNDTITTSEDLIRAALKGMI) are domain III.

The protein belongs to the RuvA family. In terms of assembly, homotetramer. Forms an RuvA(8)-RuvB(12)-Holliday junction (HJ) complex. HJ DNA is sandwiched between 2 RuvA tetramers; dsDNA enters through RuvA and exits via RuvB. An RuvB hexamer assembles on each DNA strand where it exits the tetramer. Each RuvB hexamer is contacted by two RuvA subunits (via domain III) on 2 adjacent RuvB subunits; this complex drives branch migration. In the full resolvosome a probable DNA-RuvA(4)-RuvB(12)-RuvC(2) complex forms which resolves the HJ.

It is found in the cytoplasm. The RuvA-RuvB-RuvC complex processes Holliday junction (HJ) DNA during genetic recombination and DNA repair, while the RuvA-RuvB complex plays an important role in the rescue of blocked DNA replication forks via replication fork reversal (RFR). RuvA specifically binds to HJ cruciform DNA, conferring on it an open structure. The RuvB hexamer acts as an ATP-dependent pump, pulling dsDNA into and through the RuvAB complex. HJ branch migration allows RuvC to scan DNA until it finds its consensus sequence, where it cleaves and resolves the cruciform DNA. The polypeptide is Holliday junction branch migration complex subunit RuvA (Saccharophagus degradans (strain 2-40 / ATCC 43961 / DSM 17024)).